The chain runs to 146 residues: 1,4-dihydroxy-2-naphthoyl-CoA hydrolase (146 aa).

Residue Asp19 is part of the active site.

This sequence belongs to the 4-hydroxybenzoyl-CoA thioesterase family. DHNA-CoA hydrolase subfamily.

The catalysed reaction is 1,4-dihydroxy-2-naphthoyl-CoA + H2O = 1,4-dihydroxy-2-naphthoate + CoA + H(+). The protein operates within cofactor biosynthesis; phylloquinone biosynthesis. It functions in the pathway quinol/quinone metabolism; 1,4-dihydroxy-2-naphthoate biosynthesis; 1,4-dihydroxy-2-naphthoate from chorismate: step 7/7. In terms of biological role, catalyzes the hydrolysis of 1,4-dihydroxy-2-naphthoyl-CoA (DHNA-CoA) to 1,4-dihydroxy-2-naphthoate (DHNA), a reaction involved in phylloquinone (vitamin K1) biosynthesis. In Thermosynechococcus vestitus (strain NIES-2133 / IAM M-273 / BP-1), this protein is 1,4-dihydroxy-2-naphthoyl-CoA hydrolase.